A 458-amino-acid chain; its full sequence is DNA repair protein RadA (458 aa).

A C4-type zinc finger spans residues 11–28; the sequence is CNDCGAEFSRWQGQCSAC. 100-107 is a binding site for ATP; the sequence is GHPGAGKS. Positions 256 to 260 match the RadA KNRFG motif motif; sequence KNRFG. The interval 355–458 is lon-protease-like; sequence DVFVNVVGGV…TDALAVLDNL (104 aa).

The protein belongs to the RecA family. RadA subfamily.

In terms of biological role, DNA-dependent ATPase involved in processing of recombination intermediates, plays a role in repairing DNA breaks. Stimulates the branch migration of RecA-mediated strand transfer reactions, allowing the 3' invading strand to extend heteroduplex DNA faster. Binds ssDNA in the presence of ADP but not other nucleotides, has ATPase activity that is stimulated by ssDNA and various branched DNA structures, but inhibited by SSB. Does not have RecA's homology-searching function. The sequence is that of DNA repair protein RadA from Haemophilus influenzae (strain ATCC 51907 / DSM 11121 / KW20 / Rd).